The following is a 66-amino-acid chain: Alpha-bisabolene synthase (66 aa).

This sequence belongs to the terpene synthase family. Tpsd subfamily. It depends on Mn(2+) as a cofactor. K(+) serves as cofactor.

The protein localises to the cytoplasm. The catalysed reaction is (2E,6E)-farnesyl diphosphate = (E,R)-alpha-bisabolene + diphosphate. The protein operates within terpene metabolism; oleoresin biosynthesis. Functionally, involved in defensive oleoresin formation in conifers in response to insect attack or other injury. Involved in sesquiterpene (C15) olefins biosynthesis. The polypeptide is Alpha-bisabolene synthase (Pseudotsuga menziesii (Douglas-fir)).